The sequence spans 403 residues: Glycerophosphocholine acyltransferase 1 (403 aa).

At 1-112 the chain is on the cytoplasmic side; that stretch reads MDHLEFDENT…SGKVVRFRDK (112 aa). The helical transmembrane segment at 113–133 threads the bilayer; that stretch reads LSFALGVSTCILTALLVGMAP. Residues 134–137 lie on the Lumenal side of the membrane; it reads ESMH. A helical transmembrane segment spans residues 138–155; that stretch reads LWYTIQLFVYLPLRYYTY. Residues 156 to 161 lie on the Cytoplasmic side of the membrane; sequence QRKGYE. The chain crosses the membrane as a helical span at residues 162–182; sequence YFIADFCYWGNILLLVYIWIF. Topologically, residues 183 to 186 are lumenal; it reads PESR. The helical transmembrane segment at 187-207 threads the bilayer; that stretch reads RLFILSYSISYGTLAWSVVAW. The Cytoplasmic portion of the chain corresponds to 208-218; the sequence is RNSLLFHSIDK. Residues 219–239 traverse the membrane as a helical segment; sequence ITSLFIHFFPPLVLHTIVHLT. Residue N240 is glycosylated (N-linked (GlcNAc...) asparagine). The Lumenal segment spans residues 240–262; sequence NKSYLKDRFPAVLKVKKIDLLSS. The helical transmembrane segment at 263-283 threads the bilayer; it reads VEIASFFYALWQIWYYFFIQV. Residues 284-322 are Cytoplasmic-facing; the sequence is GKQKQIQEGRPTSFTWLSKAYSKTKLGRAVAKLPQNLQP. The helical transmembrane segment at 323–343 threads the bilayer; that stretch reads FVFMIIQYLYSITTMLPCSLW. The Lumenal portion of the chain corresponds to 344–352; it reads YNNKLYSTA. The chain crosses the membrane as a helical span at residues 353–373; the sequence is FLALIFGWSVWNGASYYIDVF. Residues 374-403 lie on the Cytoplasmic side of the membrane; the sequence is GRRFQKELEALRQQLAETPTNSGSSSALSR.

The protein belongs to the GPC1 family.

Its subcellular location is the endoplasmic reticulum membrane. The protein resides in the golgi apparatus membrane. The enzyme catalyses sn-glycerol 3-phosphocholine + an acyl-CoA = a 1-acyl-sn-glycero-3-phosphocholine + CoA. The catalysed reaction is sn-glycero-3-phosphoethanolamine + an acyl-CoA = a monoacyl-sn-glycero-3-phosphoethanolamine + CoA. It catalyses the reaction sn-glycero-3-phosphoethanolamine + (9Z)-octadecenoyl-CoA = (9Z-octadecenoyl)-sn-glycero-3-phosphoethanolamine + CoA. Its function is as follows. Glycerophosphocholine acyltransferase (GPCAT) that utilizes acyl-CoA to acylate glycero-3-phosphocholine (GPC), forming lysophosphatidylcholine (LPC). Shows broad acyl specificities with a preference for 16:0-CoA, polyunsaturated acyl-CoA, and the hydroxylated ricinoleoyl-CoA. Also catalyzes the acylation of glycero-3-phosphoethanolamine (GPE) with acyl-CoA. In addition to acyl-CoA, GPCAT efficiently utilizes LPC and lysophosphatidylethanolamine (LPE) as acyl donors in the acylation of GPC. Contributes to the maintenance of phosphatidylcholine (PC) homeostasis and might also have specific functions in acyl editing of PC, such as transferring acyl groups modified at the sn-2 position of PC to the sn-1. This is Glycerophosphocholine acyltransferase 1 from Schizosaccharomyces pombe (strain 972 / ATCC 24843) (Fission yeast).